A 1436-amino-acid polypeptide reads, in one-letter code: DNA-directed RNA polymerase subunit beta (1436 aa).

Belongs to the RNA polymerase beta chain family. The RNAP catalytic core consists of 2 alpha, 1 beta, 1 beta' and 1 omega subunit. When a sigma factor is associated with the core the holoenzyme is formed, which can initiate transcription.

It carries out the reaction RNA(n) + a ribonucleoside 5'-triphosphate = RNA(n+1) + diphosphate. DNA-dependent RNA polymerase catalyzes the transcription of DNA into RNA using the four ribonucleoside triphosphates as substrates. The polypeptide is DNA-directed RNA polymerase subunit beta (Wolbachia pipientis).